A 503-amino-acid chain; its full sequence is Capsanthin/capsorubin synthase, chromoplastic (503 aa).

An NAD(+)-binding site is contributed by 88–117 (VIIIGTGPAGLRLAEQVSSRHSVKVCCVDP).

This sequence belongs to the lycopene cyclase family.

It is found in the plastid. Its subcellular location is the chromoplast. The enzyme catalyses all-trans-violaxanthin = all-trans-capsorubin. It carries out the reaction all-trans-antheraxanthin = all-trans-capsanthin. It participates in carotenoid biosynthesis; capsanthin biosynthesis; capsanthin from antheraxanthin: step 1/1. It functions in the pathway carotenoid biosynthesis; capsorubin biosynthesis; capsorubin from violaxanthin: step 1/1. Its function is as follows. Catalyzes the conversion of the ubiquitous 5,6-epoxycarotenoids, antheraxanthin and violaxanthin, into capsanthin and capsorubin, respectively. The sequence is that of Capsanthin/capsorubin synthase, chromoplastic (CCS) from Citrus sinensis (Sweet orange).